The sequence spans 179 residues: Large ribosomal subunit protein uL5 (179 aa).

The protein belongs to the universal ribosomal protein uL5 family. As to quaternary structure, part of the 50S ribosomal subunit; part of the 5S rRNA/L5/L18/L25 subcomplex. Contacts the 5S rRNA and the P site tRNA. Forms a bridge to the 30S subunit in the 70S ribosome.

Its function is as follows. This is one of the proteins that bind and probably mediate the attachment of the 5S RNA into the large ribosomal subunit, where it forms part of the central protuberance. In the 70S ribosome it contacts protein S13 of the 30S subunit (bridge B1b), connecting the 2 subunits; this bridge is implicated in subunit movement. Contacts the P site tRNA; the 5S rRNA and some of its associated proteins might help stabilize positioning of ribosome-bound tRNAs. This is Large ribosomal subunit protein uL5 from Enterobacter sp. (strain 638).